A 620-amino-acid chain; its full sequence is Cryptochrome-1 (620 aa).

The Photolyase/cryptochrome alpha/beta domain maps to 3–132 (VNAVHWFRKG…EVIVRISHTL (130 aa)). Short sequence motifs (LIR) lie at residues 50–54 (NRWRF), 82–87 (DVFPRL), and 151–156 (KRFQTL). S252 lines the FAD pocket. Short sequence motifs (LIR) lie at residues 255–260 (LRFGCL), 271–276 (DLYKKV), 285–290 (SLYGQL), and 335–339 (TGFPW). Q289 contacts FAD. H355 serves as a coordination point for FAD. The LIR 8 signature appears at 379 to 384 (KVFEEL). Residue 387 to 389 (DAD) coordinates FAD. Short sequence motifs (LIR) lie at residues 395-400 (GSWMWL), 411-416 (HCYCPV), 430-435 (RRYLPV), 486-491 (QIYQQL), and 492-497 (SRYRGL). The segment at 593 to 620 (TGISAGKRPNPEEETQSVGPKVQRQSTN) is disordered.

The protein belongs to the DNA photolyase class-1 family. As to quaternary structure, component of the circadian core oscillator, which includes the CRY proteins, CLOCK or NPAS2, BMAL1 or BMAL2, CSNK1E, and the PER proteins. It depends on FAD as a cofactor. The cofactor is (6R)-5,10-methylene-5,6,7,8-tetrahydrofolate. Expressed in the retina.

The protein resides in the cytoplasm. It is found in the nucleus. Functionally, transcriptional repressor which forms a core component of the circadian clock. The circadian clock, an internal time-keeping system, regulates various physiological processes through the generation of approximately 24 hour circadian rhythms in gene expression, which are translated into rhythms in metabolism and behavior. It is derived from the Latin roots 'circa' (about) and 'diem' (day) and acts as an important regulator of a wide array of physiological functions including metabolism, sleep, body temperature, blood pressure, endocrine, immune, cardiovascular, and renal function. Consists of two major components: the central clock, residing in the suprachiasmatic nucleus (SCN) of the brain, and the peripheral clocks that are present in nearly every tissue and organ system. Both the central and peripheral clocks can be reset by environmental cues, also known as Zeitgebers (German for 'timegivers'). The predominant Zeitgeber for the central clock is light, which is sensed by retina and signals directly to the SCN. The central clock entrains the peripheral clocks through neuronal and hormonal signals, body temperature and feeding-related cues, aligning all clocks with the external light/dark cycle. Circadian rhythms allow an organism to achieve temporal homeostasis with its environment at the molecular level by regulating gene expression to create a peak of protein expression once every 24 hours to control when a particular physiological process is most active with respect to the solar day. Transcription and translation of core clock components (CLOCK, NPAS2, BMAL1, BMAL2, PER1, PER2, PER3, CRY1 and CRY2) plays a critical role in rhythm generation, whereas delays imposed by post-translational modifications (PTMs) are important for determining the period (tau) of the rhythms (tau refers to the period of a rhythm and is the length, in time, of one complete cycle). A diurnal rhythm is synchronized with the day/night cycle, while the ultradian and infradian rhythms have a period shorter and longer than 24 hours, respectively. Disruptions in the circadian rhythms contribute to the pathology of cardiovascular diseases, cancer, metabolic syndromes and aging. A transcription/translation feedback loop (TTFL) forms the core of the molecular circadian clock mechanism. Transcription factors, CLOCK or NPAS2 and BMAL1 or BMAL2, form the positive limb of the feedback loop, act in the form of a heterodimer and activate the transcription of core clock genes and clock-controlled genes (involved in key metabolic processes), harboring E-box elements (5'-CACGTG-3') within their promoters. The core clock genes: PER1/2/3 and CRY1/2 which are transcriptional repressors form the negative limb of the feedback loop and interact with the CLOCK|NPAS2-BMAL1|BMAL2 heterodimer inhibiting its activity and thereby negatively regulating their own expression. This heterodimer also activates nuclear receptors NR1D1/2 and RORA/B/G, which form a second feedback loop and which activate and repress BMAL1 transcription, respectively. CRY1 and CRY2 have redundant functions but also differential and selective contributions at least in defining the pace of the SCN circadian clock and its circadian transcriptional outputs. More potent transcriptional repressor in cerebellum and liver than CRY2, though more effective in lengthening the period of the SCN oscillator. On its side, CRY2 seems to play a critical role in tuning SCN circadian period by opposing the action of CRY1. With CRY2, is dispensable for circadian rhythm generation but necessary for the development of intercellular networks for rhythm synchrony. Capable of translocating circadian clock core proteins such as PER proteins to the nucleus. Interacts with CLOCK-BMAL1 independently of PER proteins and is found at CLOCK-BMAL1-bound sites, suggesting that CRY may act as a molecular gatekeeper to maintain CLOCK-BMAL1 in a poised and repressed state until the proper time for transcriptional activation. The chain is Cryptochrome-1 (CRY1) from Erithacus rubecula (European robin).